A 104-amino-acid polypeptide reads, in one-letter code: MRGQQAPPQQPTRVRTPRENENEVLGVIEQMLGASRVRVRCMDGKLRMGRIPGKLKRKIWVREDDVVIVTPWEVQSDEKCDVIWRYTKGQVDWLNKKGYLDFMR.

Low complexity predominate over residues 1–14 (MRGQQAPPQQPTRV). The tract at residues 1–20 (MRGQQAPPQQPTRVRTPREN) is disordered. Residues 12 to 87 (TRVRTPRENE…EKCDVIWRYT (76 aa)) enclose the S1-like domain.

Belongs to the eIF-1A family.

Functionally, seems to be required for maximal rate of protein biosynthesis. Enhances ribosome dissociation into subunits and stabilizes the binding of the initiator Met-tRNA(I) to 40 S ribosomal subunits. In Methanococcus maripaludis (strain C6 / ATCC BAA-1332), this protein is Translation initiation factor 1A (eIF1A).